Consider the following 276-residue polypeptide: Syntaxin-12 (276 aa).

The residue at position 2 (serine 2) is an N-acetylserine. Topologically, residues 2–248 (SYGPLDMYRN…RAAYYQKKSR (247 aa)) are cytoplasmic. A coiled-coil region spans residues 33–131 (IQRISQATAQ…RRVSEKEKES (99 aa)). 4 positions are modified to phosphoserine: serine 139, serine 142, serine 218, and serine 225. The 63-residue stretch at 178–240 (LELIKERETA…ERATEQLQRA (63 aa)) folds into the t-SNARE coiled-coil homology domain. Residues 249 to 269 (KKMCILVLVLSVIIVILGLII) form a helical; Anchor for type IV membrane protein membrane-spanning segment. Residues 270–276 (WLVYKTK) are Vesicular-facing.

This sequence belongs to the syntaxin family. In terms of assembly, associates with the BLOC-1 complex. Interacts with BLOC1S6. Interacts with NAPA and SNAP23. Identified in a complex containing STX6, STX12, VAMP4 and VTI1A. Interacts with GRIPAP1. Forms a complex with GRIP1, GRIA2 and NSG1; controls the intracellular fate of AMPAR and the endosomal sorting of the GRIA2 subunit toward recycling and membrane targeting. Interacts with NSG1. Interacts with TPC1. Interacts (via N-terminus) with VPS13B.

The protein resides in the endosome membrane. The protein localises to the golgi apparatus membrane. It is found in the endomembrane system. Its subcellular location is the early endosome membrane. It localises to the recycling endosome membrane. Functionally, SNARE promoting fusion of transport vesicles with target membranes. Together with SNARE STX6, promotes movement of vesicles from endosomes to the cell membrane, and may therefore function in the endocytic recycling pathway. Through complex formation with GRIP1, GRIA2 and NSG1 controls the intracellular fate of AMPAR and the endosomal sorting of the GRIA2 subunit toward recycling and membrane targeting. The protein is Syntaxin-12 (STX12) of Pongo abelii (Sumatran orangutan).